We begin with the raw amino-acid sequence, 545 residues long: Chaperonin GroEL (545 aa).

Residues T29–P32, K50, D86–T90, G415, and D495 contribute to the ATP site.

It belongs to the chaperonin (HSP60) family. In terms of assembly, forms a cylinder of 14 subunits composed of two heptameric rings stacked back-to-back. Interacts with the co-chaperonin GroES.

Its subcellular location is the cytoplasm. The catalysed reaction is ATP + H2O + a folded polypeptide = ADP + phosphate + an unfolded polypeptide.. Its function is as follows. Together with its co-chaperonin GroES, plays an essential role in assisting protein folding. The GroEL-GroES system forms a nano-cage that allows encapsulation of the non-native substrate proteins and provides a physical environment optimized to promote and accelerate protein folding. In Phocaeicola vulgatus (strain ATCC 8482 / DSM 1447 / JCM 5826 / CCUG 4940 / NBRC 14291 / NCTC 11154) (Bacteroides vulgatus), this protein is Chaperonin GroEL.